A 529-amino-acid polypeptide reads, in one-letter code: Probable anion transporter 1, chloroplastic (529 aa).

The transit peptide at 1 to 55 (MLYLLPLSVSCRVPGSPPAPRSRRFLDPGGGRGVGDGLGGVRVFRRRALRGTDVR) directs the protein to the chloroplast. Disordered stretches follow at residues 13-39 (VPGS…DGLG) and 52-78 (TDVR…GGYG). A compositionally biased stretch (gly residues) spans 28–39 (PGGGRGVGDGLG). The span at 67–76 (RHDDARHDGG) shows a compositional bias: basic and acidic residues. Transmembrane regions (helical) follow at residues 120–140 (WAIV…RVNM), 158–178 (VGLI…AGGI), 187–207 (TVLG…PFAA), 209–229 (LGLP…GVAM), 251–271 (LVYS…PLLI), 274–294 (FGWP…FSTW), 340–360 (VWAL…LLTW), 378–398 (LFCV…GWIA), 418–438 (IGFL…SPAM), 469–489 (AGVL…FGTA), and 503–523 (VFKV…LFST).

This sequence belongs to the major facilitator superfamily. Sodium/anion cotransporter (TC 2.A.1.14) family.

The protein localises to the plastid. Its subcellular location is the chloroplast membrane. In terms of biological role, probable anion transporter. This Oryza sativa subsp. japonica (Rice) protein is Probable anion transporter 1, chloroplastic (PHT4;1).